A 332-amino-acid chain; its full sequence is Nuclear migration protein nudC (332 aa).

Residues 122-161 (RQQLLDSAGGEPSASNRDGISKPIEKVDDESDKSELGKLM) form a disordered region. The CS domain maps to 168-259 (CTLENYTWTQ…NKMNWWSRLV (92 aa)).

It belongs to the nudC family. As to quaternary structure, interacts with PCID2.

Its subcellular location is the cytoplasm. In terms of biological role, chaperone protein with functions in nuclear localization and cytoplasmic mRNA trafficking. In postmitotic neurons, acts with nudE downstream of dar1 to ensure correct positioning of the nuclei in primary dendrites and as a consequence, is required for determining multipolar neuron morphology. Stabilizes PCID2 in the cytoplasm and thereby is required for promoting cytoplasmic mRNA trafficking. This chain is Nuclear migration protein nudC, found in Drosophila melanogaster (Fruit fly).